Here is a 29-residue protein sequence, read N- to C-terminus: Protamine-like protein (29 aa).

The segment at 1-29 (MRSFDQGSTRAPARERCRRQRPEGRSAQR) is disordered. A compositionally biased stretch (basic and acidic residues) spans 12–29 (PARERCRRQRPEGRSAQR).

This is Protamine-like protein (tpr) from Escherichia coli (strain K12).